The following is a 291-amino-acid chain: Phosphate import ATP-binding protein PstB (291 aa).

Positions 43-286 (ANVKDLSFWY…PKHAMTEEYI (244 aa)) constitute an ABC transporter domain. An ATP-binding site is contributed by 75–82 (GASGCGKS).

This sequence belongs to the ABC transporter superfamily. Phosphate importer (TC 3.A.1.7) family. As to quaternary structure, the complex is composed of two ATP-binding proteins (PstB), two transmembrane proteins (PstC and PstA) and a solute-binding protein (PstS).

The protein localises to the cell inner membrane. It carries out the reaction phosphate(out) + ATP + H2O = ADP + 2 phosphate(in) + H(+). In terms of biological role, part of the ABC transporter complex PstSACB involved in phosphate import. Responsible for energy coupling to the transport system. In Alcaligenes faecalis, this protein is Phosphate import ATP-binding protein PstB.